Consider the following 125-residue polypeptide: Holo-[acyl-carrier-protein] synthase (125 aa).

2 residues coordinate Mg(2+): D8 and E57.

This sequence belongs to the P-Pant transferase superfamily. AcpS family. It depends on Mg(2+) as a cofactor.

Its subcellular location is the cytoplasm. It catalyses the reaction apo-[ACP] + CoA = holo-[ACP] + adenosine 3',5'-bisphosphate + H(+). Its function is as follows. Transfers the 4'-phosphopantetheine moiety from coenzyme A to a Ser of acyl-carrier-protein. The polypeptide is Holo-[acyl-carrier-protein] synthase (Azoarcus sp. (strain BH72)).